We begin with the raw amino-acid sequence, 500 residues long: Ent-cassadiene C11-alpha-hydroxylase 1 (500 aa).

The chain crosses the membrane as a helical span at residues 4 to 24; it reads SQVWLLWGALSVAVLFYLSTL. Cys442 serves as a coordination point for heme.

The protein belongs to the cytochrome P450 family. It depends on heme as a cofactor.

The protein resides in the membrane. The catalysed reaction is ent-cassa-12,15-diene + reduced [NADPH--hemoprotein reductase] + O2 = ent-11beta-hydroxycassa-12,15-diene + oxidized [NADPH--hemoprotein reductase] + H2O + H(+). Enzyme of the diterpenoid metabolism involved in the biosynthesis of antibacterial oryzalides such as phytocassane. Can use ent-cassadiene as substrate, but not C11-alpha-hydroxy-ent-cassadiene, ent-pimaradiene, ent-sandaracopimaradiene, ent-kaurene, ent-isokaurene, syn-pimaradiene, syn-stemarene, syn-stemodene. The chain is Ent-cassadiene C11-alpha-hydroxylase 1 from Oryza sativa subsp. japonica (Rice).